Consider the following 209-residue polypeptide: uncharacterized protein (209 aa).

An N-terminal signal peptide occupies residues 1–19 (MGYFPYLAVFVCLLASGDA). N-linked (GlcNAc...) asparagine glycans are attached at residues asparagine 41 and asparagine 109.

In terms of tissue distribution, component of the acid-soluble organic matrix of prismatic shell layers (at protein level).

The protein localises to the secreted. This is an uncharacterized protein from Haliotis asinina (Donkey's ear abalone).